The primary structure comprises 233 residues: Ion-translocating oxidoreductase complex subunit E (233 aa).

Transmembrane regions (helical) follow at residues 18-38 (ALVQ…ATNA), 39-59 (LGLG…VSAL), 69-89 (IPIY…LINA), 92-112 (FGLY…CIVI), 128-148 (ALDG…LGAL), and 182-202 (PFLL…LLAG).

This sequence belongs to the NqrDE/RnfAE family. The complex is composed of six subunits: RnfA, RnfB, RnfC, RnfD, RnfE and RnfG.

The protein resides in the cell inner membrane. Its function is as follows. Part of a membrane-bound complex that couples electron transfer with translocation of ions across the membrane. This Yersinia pseudotuberculosis serotype O:1b (strain IP 31758) protein is Ion-translocating oxidoreductase complex subunit E.